The chain runs to 206 residues: Protein GrpE (206 aa).

A compositionally biased stretch (basic and acidic residues) spans 1–14; that stretch reads MDKKNEQQEVREEN. A disordered region spans residues 1–56; that stretch reads MDKKNEQQEVREENDTSINQESETQVELEEEVVNEECETSSEKTDEKEVDDENVTD. Acidic residues predominate over residues 24–39; it reads TQVELEEEVVNEECET.

It belongs to the GrpE family. Homodimer.

Its subcellular location is the cytoplasm. Participates actively in the response to hyperosmotic and heat shock by preventing the aggregation of stress-denatured proteins, in association with DnaK and GrpE. It is the nucleotide exchange factor for DnaK and may function as a thermosensor. Unfolded proteins bind initially to DnaJ; upon interaction with the DnaJ-bound protein, DnaK hydrolyzes its bound ATP, resulting in the formation of a stable complex. GrpE releases ADP from DnaK; ATP binding to DnaK triggers the release of the substrate protein, thus completing the reaction cycle. Several rounds of ATP-dependent interactions between DnaJ, DnaK and GrpE are required for fully efficient folding. This chain is Protein GrpE, found in Clostridioides difficile (strain 630) (Peptoclostridium difficile).